Reading from the N-terminus, the 139-residue chain is ATP synthase epsilon chain (139 aa).

The protein belongs to the ATPase epsilon chain family. F-type ATPases have 2 components, CF(1) - the catalytic core - and CF(0) - the membrane proton channel. CF(1) has five subunits: alpha(3), beta(3), gamma(1), delta(1), epsilon(1). CF(0) has three main subunits: a, b and c.

It is found in the cell membrane. Functionally, produces ATP from ADP in the presence of a proton gradient across the membrane. This Ligilactobacillus salivarius (strain UCC118) (Lactobacillus salivarius) protein is ATP synthase epsilon chain.